The following is a 269-amino-acid chain: Hemin import ATP-binding protein HmuV (269 aa).

Residues 2-242 (LEVIHTGLNI…AMVEACFDLP (241 aa)) form the ABC transporter domain. Residue 34-41 (GPNGAGKS) participates in ATP binding.

The protein belongs to the ABC transporter superfamily. Heme (hemin) importer (TC 3.A.1.14.5) family. The complex is composed of two ATP-binding proteins (HmuV), two transmembrane proteins (HmuU) and a solute-binding protein (HmuT).

It localises to the cell inner membrane. In terms of biological role, part of the ABC transporter complex HmuTUV involved in hemin import. Responsible for energy coupling to the transport system. The polypeptide is Hemin import ATP-binding protein HmuV (Methylobacillus flagellatus (strain ATCC 51484 / DSM 6875 / VKM B-1610 / KT)).